Consider the following 177-residue polypeptide: Large ribosomal subunit protein uL6 (177 aa).

It belongs to the universal ribosomal protein uL6 family. In terms of assembly, part of the 50S ribosomal subunit.

Its function is as follows. This protein binds to the 23S rRNA, and is important in its secondary structure. It is located near the subunit interface in the base of the L7/L12 stalk, and near the tRNA binding site of the peptidyltransferase center. The sequence is that of Large ribosomal subunit protein uL6 from Sinorhizobium fredii (strain NBRC 101917 / NGR234).